The sequence spans 154 residues: Ribosomal RNA large subunit methyltransferase H (154 aa).

Positions 70 and 102 each coordinate S-adenosyl-L-methionine.

This sequence belongs to the RNA methyltransferase RlmH family. Homodimer.

The protein localises to the cytoplasm. It carries out the reaction pseudouridine(1915) in 23S rRNA + S-adenosyl-L-methionine = N(3)-methylpseudouridine(1915) in 23S rRNA + S-adenosyl-L-homocysteine + H(+). In terms of biological role, specifically methylates the pseudouridine at position 1915 (m3Psi1915) in 23S rRNA. The chain is Ribosomal RNA large subunit methyltransferase H from Hyphomonas neptunium (strain ATCC 15444).